Reading from the N-terminus, the 143-residue chain is Large ribosomal subunit protein uL15 (143 aa).

A disordered region spans residues M1 to E51. The span at R21–A31 shows a compositional bias: gly residues.

It belongs to the universal ribosomal protein uL15 family. As to quaternary structure, part of the 50S ribosomal subunit.

In terms of biological role, binds to the 23S rRNA. This chain is Large ribosomal subunit protein uL15, found in Thioalkalivibrio sulfidiphilus (strain HL-EbGR7).